A 298-amino-acid chain; its full sequence is Specificity protein transcription factor 1 (298 aa).

Positions valine 206–threonine 218 are enriched in low complexity. The interval valine 206–alanine 233 is disordered. A C2H2-type zinc finger spans residues histidine 260–histidine 284.

The protein belongs to the Sp1 C2H2-type zinc-finger protein family. Expressed in ASJ sensory neurons, pharyngeal cells, rectal cells, intestine, seam cells, and vulval cells.

Its function is as follows. Probable transcription factor which modulates gene expression, thereby acting as an ASJ sensory neuron terminal selector gene. The polypeptide is Specificity protein transcription factor 1 (Caenorhabditis elegans).